A 736-amino-acid polypeptide reads, in one-letter code: Microtubule-associated protein mu-2 (736 aa).

Belongs to the orthoreovirus mu-2 protein family. In terms of assembly, interacts with protein mu-NS; in viral inclusions. Interacts with polymerase lambda-3; this interaction stimulates the ATPase activity of mu-2. Requires a divalent metal cation as cofactor.

The protein localises to the virion. The protein resides in the host cytoplasm. It localises to the host cytoskeleton. Minor inner capsid (core) component. Displays NTPase and RNA 5'-triphosphatase (RTPase) activities. ATP is the preferred substrate for hydrolysis. May function as a cofactor of polymerase lambda-3. Associates with microtubules and plays a role in the formation, structural organization and morphology of viral inclusions, where the assembly of cores and the replication of viral RNA occur. Together with mu-NS, recruits the other core proteins to these inclusions. This Mammalia (T2J) protein is Microtubule-associated protein mu-2 (M1).